The sequence spans 539 residues: MAKMLKFSEEARRALERGVDAVADAVKITLGPKGRNVVIEKSWGSPTITNDGVSIAKEIELEDKFENLGAQLVKEVASKTNDVAGDGTTTATVLAQAMIKEGIKNVTAGANPILVKRGIEKAVAAGVEEIKKISKKLSSTNDIAHVASISANSEEIGKLIAEAMEKVGEDGVITVEDSKSIETYVEFTEGMQFDRGYVSPYFVTDPEKMEVVYNEPFILITDRKLSNIKPLIPILEKVAQTGKPLVIIAEDVEGEALTTLVLNKLKGTLNTVAVKAPGFGDRRKAMLQDIAILTGGIVASEEVGINLEDLTLNDLGRADVVRVKKDETIIVGGHGDQEEIKKRIAQIKAQIEQTTSEYEKETLQERMAKLAGGVAVIKVGAATETELKEKKHRIEDALSATRAAVEEGIVPGGGITLLRARKAVEKVVNELDGDEKIGAKIVYEALIAPINQIAKNAGYDGAIIIHKVLENDDPAYGFDALKGEYCNMFERGIIDPAKVTRSALQNAASIASMLLTTEALVVEKPEPKNNAPMPEMPEY.

ATP is bound by residues T29–P32, D86–T90, G413, D479–L481, and D495.

Belongs to the chaperonin (HSP60) family. As to quaternary structure, forms a cylinder of 14 subunits composed of two heptameric rings stacked back-to-back. Interacts with the co-chaperonin GroES.

It localises to the cytoplasm. It catalyses the reaction ATP + H2O + a folded polypeptide = ADP + phosphate + an unfolded polypeptide.. In terms of biological role, together with its co-chaperonin GroES, plays an essential role in assisting protein folding. The GroEL-GroES system forms a nano-cage that allows encapsulation of the non-native substrate proteins and provides a physical environment optimized to promote and accelerate protein folding. The chain is Chaperonin GroEL from Thermosipho africanus (strain TCF52B).